The sequence spans 135 residues: Large ribosomal subunit protein uL16c (135 aa).

Belongs to the universal ribosomal protein uL16 family. Part of the 50S ribosomal subunit.

It localises to the plastid. The protein resides in the chloroplast. The chain is Large ribosomal subunit protein uL16c from Platanus occidentalis (Sycamore).